Here is a 455-residue protein sequence, read N- to C-terminus: tRNA modification GTPase MnmE (455 aa).

3 residues coordinate (6S)-5-formyl-5,6,7,8-tetrahydrofolate: Arg-22, Glu-85, and Arg-124. The region spanning 220–377 is the TrmE-type G domain; that stretch reads GIYTVIVGRP…VEKAIKEAIL (158 aa). A K(+)-binding site is contributed by Asn-230. GTP contacts are provided by residues 230-235, 249-255, and 274-277; these read NVGKSS, TDIPGTT, and DTAG. Ser-234 contributes to the Mg(2+) binding site. Residues Thr-249, Ile-251, and Thr-254 each coordinate K(+). Residue Thr-255 participates in Mg(2+) binding. Lys-455 lines the (6S)-5-formyl-5,6,7,8-tetrahydrofolate pocket.

Belongs to the TRAFAC class TrmE-Era-EngA-EngB-Septin-like GTPase superfamily. TrmE GTPase family. In terms of assembly, homodimer. Heterotetramer of two MnmE and two MnmG subunits. The cofactor is K(+).

It localises to the cytoplasm. Exhibits a very high intrinsic GTPase hydrolysis rate. Involved in the addition of a carboxymethylaminomethyl (cmnm) group at the wobble position (U34) of certain tRNAs, forming tRNA-cmnm(5)s(2)U34. The sequence is that of tRNA modification GTPase MnmE from Caldicellulosiruptor saccharolyticus (strain ATCC 43494 / DSM 8903 / Tp8T 6331).